The sequence spans 332 residues: Anthranilate phosphoribosyltransferase (332 aa).

5-phospho-alpha-D-ribose 1-diphosphate-binding positions include glycine 79, glycine 82–aspartate 83, threonine 87, asparagine 89–threonine 92, lysine 107–serine 115, and serine 119. Glycine 79 serves as a coordination point for anthranilate. Serine 91 is a Mg(2+) binding site. An anthranilate-binding site is contributed by asparagine 110. An anthranilate-binding site is contributed by arginine 165. Residues aspartate 223 and glutamate 224 each contribute to the Mg(2+) site.

Belongs to the anthranilate phosphoribosyltransferase family. In terms of assembly, homodimer. The cofactor is Mg(2+).

The catalysed reaction is N-(5-phospho-beta-D-ribosyl)anthranilate + diphosphate = 5-phospho-alpha-D-ribose 1-diphosphate + anthranilate. Its pathway is amino-acid biosynthesis; L-tryptophan biosynthesis; L-tryptophan from chorismate: step 2/5. Catalyzes the transfer of the phosphoribosyl group of 5-phosphorylribose-1-pyrophosphate (PRPP) to anthranilate to yield N-(5'-phosphoribosyl)-anthranilate (PRA). This is Anthranilate phosphoribosyltransferase from Vibrio vulnificus (strain CMCP6).